The primary structure comprises 169 residues: S-ribosylhomocysteine lyase (169 aa).

Residues His-54, His-58, and Cys-128 each contribute to the Fe cation site.

It belongs to the LuxS family. In terms of assembly, homodimer. The cofactor is Fe cation.

The catalysed reaction is S-(5-deoxy-D-ribos-5-yl)-L-homocysteine = (S)-4,5-dihydroxypentane-2,3-dione + L-homocysteine. Involved in the synthesis of autoinducer 2 (AI-2) which is secreted by bacteria and is used to communicate both the cell density and the metabolic potential of the environment. The regulation of gene expression in response to changes in cell density is called quorum sensing. Catalyzes the transformation of S-ribosylhomocysteine (RHC) to homocysteine (HC) and 4,5-dihydroxy-2,3-pentadione (DPD). The polypeptide is S-ribosylhomocysteine lyase (Shewanella pealeana (strain ATCC 700345 / ANG-SQ1)).